A 451-amino-acid chain; its full sequence is Bifunctional protein GlmU (451 aa).

Residues 1-229 (MERFAVILAA…FDETIGVNDR (229 aa)) are pyrophosphorylase. UDP-N-acetyl-alpha-D-glucosamine-binding positions include 8-11 (LAAG), Lys-22, Gln-72, and 77-78 (GT). Asp-102 contributes to the Mg(2+) binding site. Residues Gly-139, Glu-154, Asn-169, and Asn-227 each coordinate UDP-N-acetyl-alpha-D-glucosamine. Asn-227 provides a ligand contact to Mg(2+). Residues 230–250 (VALSQAEAIMRKRTNERLMRE) form a linker region. The tract at residues 251–451 (GVTFMDPAST…QTNKEGYTKR (201 aa)) is N-acetyltransferase. UDP-N-acetyl-alpha-D-glucosamine contacts are provided by Arg-332 and Lys-350. The Proton acceptor role is filled by His-362. UDP-N-acetyl-alpha-D-glucosamine contacts are provided by Tyr-365 and Asn-376. Residues 385–386 (NY), Ala-422, and Arg-439 each bind acetyl-CoA.

It in the N-terminal section; belongs to the N-acetylglucosamine-1-phosphate uridyltransferase family. In the C-terminal section; belongs to the transferase hexapeptide repeat family. As to quaternary structure, homotrimer. Requires Mg(2+) as cofactor.

The protein resides in the cytoplasm. It catalyses the reaction alpha-D-glucosamine 1-phosphate + acetyl-CoA = N-acetyl-alpha-D-glucosamine 1-phosphate + CoA + H(+). It carries out the reaction N-acetyl-alpha-D-glucosamine 1-phosphate + UTP + H(+) = UDP-N-acetyl-alpha-D-glucosamine + diphosphate. It participates in nucleotide-sugar biosynthesis; UDP-N-acetyl-alpha-D-glucosamine biosynthesis; N-acetyl-alpha-D-glucosamine 1-phosphate from alpha-D-glucosamine 6-phosphate (route II): step 2/2. Its pathway is nucleotide-sugar biosynthesis; UDP-N-acetyl-alpha-D-glucosamine biosynthesis; UDP-N-acetyl-alpha-D-glucosamine from N-acetyl-alpha-D-glucosamine 1-phosphate: step 1/1. It functions in the pathway bacterial outer membrane biogenesis; LPS lipid A biosynthesis. Catalyzes the last two sequential reactions in the de novo biosynthetic pathway for UDP-N-acetylglucosamine (UDP-GlcNAc). The C-terminal domain catalyzes the transfer of acetyl group from acetyl coenzyme A to glucosamine-1-phosphate (GlcN-1-P) to produce N-acetylglucosamine-1-phosphate (GlcNAc-1-P), which is converted into UDP-GlcNAc by the transfer of uridine 5-monophosphate (from uridine 5-triphosphate), a reaction catalyzed by the N-terminal domain. This is Bifunctional protein GlmU from Exiguobacterium sp. (strain ATCC BAA-1283 / AT1b).